The following is a 165-amino-acid chain: Large ribosomal subunit protein uL11A (165 aa).

N,N-dimethylproline; by NTM1 is present on P2. 2 positions are modified to N6,N6,N6-trimethyllysine; by RKM2: K4 and K11. S25 and S38 each carry phosphoserine. N5-methylarginine; by RMT2 is present on R67. Glycyl lysine isopeptide (Lys-Gly) (interchain with G-Cter in ubiquitin) cross-links involve residues K130 and K146.

This sequence belongs to the universal ribosomal protein uL11 family. Component of the large ribosomal subunit (LSU). Mature yeast ribosomes consist of a small (40S) and a large (60S) subunit. The 40S small subunit contains 1 molecule of ribosomal RNA (18S rRNA) and 33 different proteins (encoded by 57 genes). The large 60S subunit contains 3 rRNA molecules (25S, 5.8S and 5S rRNA) and 46 different proteins (encoded by 81 genes). It appears that the main modified species for L12 contains 6 methyl groups, 2 on Pro-2, 3 on Lys-4 and 1 on Arg-67. Although not reproduced with a second method, methylation at Lys-11 cannot be ruled out.

Its subcellular location is the cytoplasm. Functionally, component of the ribosome, a large ribonucleoprotein complex responsible for the synthesis of proteins in the cell. The small ribosomal subunit (SSU) binds messenger RNAs (mRNAs) and translates the encoded message by selecting cognate aminoacyl-transfer RNA (tRNA) molecules. The large subunit (LSU) contains the ribosomal catalytic site termed the peptidyl transferase center (PTC), which catalyzes the formation of peptide bonds, thereby polymerizing the amino acids delivered by tRNAs into a polypeptide chain. The nascent polypeptides leave the ribosome through a tunnel in the LSU and interact with protein factors that function in enzymatic processing, targeting, and the membrane insertion of nascent chains at the exit of the ribosomal tunnel. The sequence is that of Large ribosomal subunit protein uL11A from Saccharomyces cerevisiae (strain ATCC 204508 / S288c) (Baker's yeast).